Here is a 460-residue protein sequence, read N- to C-terminus: UDP-N-acetylmuramoylalanine--D-glutamate ligase (460 aa).

122 to 128 (GSNGKST) is an ATP binding site.

Belongs to the MurCDEF family.

The protein localises to the cytoplasm. It catalyses the reaction UDP-N-acetyl-alpha-D-muramoyl-L-alanine + D-glutamate + ATP = UDP-N-acetyl-alpha-D-muramoyl-L-alanyl-D-glutamate + ADP + phosphate + H(+). It participates in cell wall biogenesis; peptidoglycan biosynthesis. Functionally, cell wall formation. Catalyzes the addition of glutamate to the nucleotide precursor UDP-N-acetylmuramoyl-L-alanine (UMA). This chain is UDP-N-acetylmuramoylalanine--D-glutamate ligase, found in Jannaschia sp. (strain CCS1).